The primary structure comprises 438 residues: Transmembrane protein 184C (438 aa).

7 consecutive transmembrane segments (helical) span residues leucine 17–leucine 37, alanine 48–leucine 68, isoleucine 86–isoleucine 106, valine 176–leucine 196, tyrosine 212–tyrosine 232, valine 254–isoleucine 274, and alanine 287–alanine 307. Residues proline 358–serine 438 are disordered. Low complexity-rich tracts occupy residues serine 374–valine 390 and threonine 404–threonine 413. Over residues glycine 426–serine 438 the composition is skewed to basic and acidic residues.

This sequence belongs to the TMEM184 family.

It is found in the membrane. Its function is as follows. Possible tumor suppressor which may play a role in cell growth. This is Transmembrane protein 184C (TMEM184C) from Bos taurus (Bovine).